The following is a 132-amino-acid chain: Agouti-signaling protein (132 aa).

A signal peptide spans 1 to 22 (MDVTRLLLATLLVFLCFFAAYS). An N-linked (GlcNAc...) asparagine glycan is attached at Asn39. The disordered stretch occupies residues 61–93 (KISRKEAEKKRSSKKEASKQKVARPRTPLSVPC). Residues 64-79 (RKEAEKKRSSKKEASK) show a composition bias toward basic and acidic residues. Cystine bridges form between Cys93–Cys108, Cys100–Cys114, Cys107–Cys125, Cys111–Cys132, and Cys116–Cys123. One can recognise an Agouti domain in the interval 93–132 (CVSTRGSCKPPAPACCHPCASCQCRFFRSACSCRVLNVNC).

Its subcellular location is the secreted. Functionally, involved in the regulation of melanogenesis. The binding of ASP to MC1R precludes alpha-MSH initiated signaling and thus blocks production of cAMP, leading to a down-regulation of eumelanogenesis (brown/black pigment) and thus increasing synthesis of pheomelanin (yellow/red pigment). The protein is Agouti-signaling protein (ASIP) of Callithrix geoffroyi (Geoffroy's marmoset).